The sequence spans 160 residues: Large ribosomal subunit protein uL22c (160 aa).

The protein belongs to the universal ribosomal protein uL22 family. As to quaternary structure, part of the 50S ribosomal subunit.

Its subcellular location is the plastid. The protein resides in the chloroplast. In terms of biological role, this protein binds specifically to 23S rRNA. Its function is as follows. The globular domain of the protein is located near the polypeptide exit tunnel on the outside of the subunit, while an extended beta-hairpin is found that lines the wall of the exit tunnel in the center of the 70S ribosome. The polypeptide is Large ribosomal subunit protein uL22c (rpl22) (Nasturtium officinale (Watercress)).